A 561-amino-acid chain; its full sequence is Transcription factor Clamp (561 aa).

Residues 127-149 (FKCDVCSDMFPHLALLNAHKRMH) form a C2H2-type 1 zinc finger. 4 residues coordinate Zn(2+): C129, C132, H145, and H149. The interval 290–315 (TGGTTPKREASSGSGHHPVKKRNSQQ) is disordered. 6 C2H2-type zinc fingers span residues 360–382 (FSCNICGGLFSRYSSLWSHKKLH), 388–410 (YKCSICGLAFAKAVYLKNHARIH), 416–438 (YKCQTCGMQFSQSPHLKNHERTH), 444–466 (YVCGVCDKGFARHATLWNHRRIH), 472–494 (YKCEICGSAFSQAAHLKNHAKVH), and 500–522 (YKCEICSAAFADRFALKRHRGIH).

Homodimer. Interacts with msl-2; promoting recruitment of the male-specific lethal (MSL) histone acetyltransferase complex to chromatin. Interacts with Nelf-A. Interacts with NELF-B.

It is found in the nucleus. The protein resides in the chromosome. Functionally, transcription factor involved in X-chromosome dosage compensation in males, the process by which transcription of the single X chromosome in the male is elevated. Binds to the DNA sequence (GA)n. Clamp-binding promotes nucleosome depletion and chromatin accessibility, thereby allowing access to other transcription factors. Specifically binds to cis-acting elements on the X-chromosome named chromatin entry sites and promotes recruitment of the male-specific lethal (MSL) histone acetyltransferase complex, which associates with actively transcribed genes on the male X-chromosome to upregulate their expression. Mechanistically, acts by promoting chromatin accessibility at chromatin entry sites, facilitating DNA-binding of msl-2, followed by MSL complex recruitment. In addition to dosage compensation, also involved in zygotic genome activation (ZGA), a critical event in early embryonic development during which the developmental control passes from maternally provided mRNAs to the expression of the zygotic genome after fertilization. Maternally-provided protein cooperates with Zelda (zld) to activate zygotic transcription by increasing chromatin accessibility at promoters of specific genes and facilitate zld occupancy at a subset of key embryonic promoters. Also acts as an activator of gypsy chromatin insulator function by promoting binding of Cp190 to chromatin. The chain is Transcription factor Clamp from Drosophila melanogaster (Fruit fly).